Consider the following 383-residue polypeptide: 2-aminoethylphosphonate--pyruvate transaminase (383 aa).

Position 192 is an N6-(pyridoxal phosphate)lysine (lysine 192).

This sequence belongs to the class-V pyridoxal-phosphate-dependent aminotransferase family. PhnW subfamily. As to quaternary structure, homodimer. Requires pyridoxal 5'-phosphate as cofactor.

The catalysed reaction is (2-aminoethyl)phosphonate + pyruvate = phosphonoacetaldehyde + L-alanine. In terms of biological role, involved in phosphonate degradation. In Rhizobium meliloti (strain 1021) (Ensifer meliloti), this protein is 2-aminoethylphosphonate--pyruvate transaminase.